Reading from the N-terminus, the 221-residue chain is Iron-sulfur cluster assembly SufBD family protein ycf24 (221 aa).

The protein belongs to the iron-sulfur cluster assembly SufBD family.

The protein localises to the plastid. It localises to the chloroplast. The protein is Iron-sulfur cluster assembly SufBD family protein ycf24 (ycf24) of Galdieria sulphuraria (Red alga).